The following is a 769-amino-acid chain: TSC22 domain family protein 2 (769 aa).

Disordered stretches follow at residues 20–86 (AQVA…TVSP), 224–292 (HGLD…PQPM), 334–353 (AQPGPAGGSSLSQQFAYPQP), and 520–563 (VPAP…SLPQ). The span at 28–37 (EDTESLDDPD) shows a compositional bias: acidic residues. The span at 229–252 (GTDSSLTAVSQLPPSEKMSQPTLA) shows a compositional bias: polar residues. A compositionally biased stretch (low complexity) spans 269–279 (GGAVAPSSASL). Low complexity predominate over residues 531–541 (SSHTPVSRSSS). A compositionally biased stretch (polar residues) spans 542–563 (VIQQVGSPLAQGTHSAPTSLPQ). Residues 691-725 (MYAVREEVEVLKEQIKELVERNSLLERENALLKSL) adopt a coiled-coil conformation. Residues 726-745 (SNNDQLSQLPAQQANPGSTS) are compositionally biased toward polar residues. Residues 726–769 (SNNDQLSQLPAQQANPGSTSQQQAMIAQPPQPTQPPQQPNVSSA) form a disordered region. The segment covering 754-763 (PPQPTQPPQQ) has biased composition (pro residues).

This sequence belongs to the TSC-22/Dip/Bun family. Interacts with NRBP1. Interacts with PKM isoform M2; the interaction results in reduced nuclear levels of PKM isoform M2, leading to repression of cyclin CCND1 transcription and reduced cell growth. Interacts with WDR77. As to expression, expressed in the cortex, medulla and papilla of the kidney. Expressed in the kidney.

In terms of biological role, reduces the level of nuclear PKM isoform M2 which results in repression of cyclin CCND1 transcription and reduced cell growth. May protect kidney cells from hyperosmotic stress. This chain is TSC22 domain family protein 2, found in Mus musculus (Mouse).